Consider the following 228-residue polypeptide: UPF0502 protein AZOSEA09860 (228 aa).

It belongs to the UPF0502 family.

In Aromatoleum aromaticum (strain DSM 19018 / LMG 30748 / EbN1) (Azoarcus sp. (strain EbN1)), this protein is UPF0502 protein AZOSEA09860.